The sequence spans 284 residues: 4-hydroxybenzoate octaprenyltransferase (284 aa).

The next 7 helical transmembrane spans lie at 13–32, 90–110, 112–132, 134–154, 164–184, 200–220, and 224–244; these read FNRP…ALWL, ALML…FTDL, TILL…MKRY, HLPQ…AYSA, LWML…YYAM, ILFG…TLSL, and IGLL…CVGL.

It belongs to the UbiA prenyltransferase family. The cofactor is Mg(2+).

It is found in the cell inner membrane. It catalyses the reaction all-trans-octaprenyl diphosphate + 4-hydroxybenzoate = 4-hydroxy-3-(all-trans-octaprenyl)benzoate + diphosphate. The protein operates within cofactor biosynthesis; ubiquinone biosynthesis. Its function is as follows. Catalyzes the prenylation of para-hydroxybenzoate (PHB) with an all-trans polyprenyl group. Mediates the second step in the final reaction sequence of ubiquinone-8 (UQ-8) biosynthesis, which is the condensation of the polyisoprenoid side chain with PHB, generating the first membrane-bound Q intermediate 3-octaprenyl-4-hydroxybenzoate. The sequence is that of 4-hydroxybenzoate octaprenyltransferase from Marinomonas sp. (strain MWYL1).